Reading from the N-terminus, the 132-residue chain is Agouti-signaling protein (132 aa).

Residues 1–22 (MDVTRLLLATLLVFLCFFTVYS) form the signal peptide. Asn39 carries an N-linked (GlcNAc...) asparagine glycan. Residues 62–93 (ISRKEAEKKRSSKKEASMKKVAQPRTPLSAPC) are disordered. Basic and acidic residues predominate over residues 63 to 79 (SRKEAEKKRSSKKEASM). Cystine bridges form between Cys93/Cys108, Cys100/Cys114, Cys107/Cys125, Cys111/Cys132, and Cys116/Cys123. Residues 93-132 (CVATRDSCKPPAPACCDPCASCQCRFFRSACSCRVLSLNC) form the Agouti domain.

It localises to the secreted. Involved in the regulation of melanogenesis. The binding of ASP to MC1R precludes alpha-MSH initiated signaling and thus blocks production of cAMP, leading to a down-regulation of eumelanogenesis (brown/black pigment) and thus increasing synthesis of pheomelanin (yellow/red pigment). This is Agouti-signaling protein (ASIP) from Trachypithecus auratus (Javan langur).